Consider the following 174-residue polypeptide: Ferredoxin-thioredoxin reductase, variable chain, chloroplastic (174 aa).

A chloroplast-targeting transit peptide spans Met-1 to Cys-62. The segment covering Asp-69–Pro-81 has biased composition (low complexity). Positions Asp-69–Lys-89 are disordered. Ser-70 and Ser-71 each carry phosphoserine.

The protein belongs to the ferredoxin thioredoxin reductase alpha subunit family. In terms of assembly, heterodimer of subunit A (variable subunit) and subunit B (catalytic subunit). Heterodimeric FTR forms a complex with ferredoxin and thioredoxin.

Its subcellular location is the plastid. It is found in the chloroplast. Variable subunit of the ferredoxin-thioredoxin reductase (FTR), which catalyzes the two-electron reduction of thioredoxins by the electrons provided by reduced ferredoxin. The sequence is that of Ferredoxin-thioredoxin reductase, variable chain, chloroplastic (FTRV) from Spinacia oleracea (Spinach).